The following is a 252-amino-acid chain: Bridging integrator 3 homolog (252 aa).

Residues 8 to 231 (GGPKKQIVPK…VDEVQLSDAE (224 aa)) form the BAR domain. 3 coiled-coil regions span residues 17–57 (KTVE…MSKS), 119–150 (SLNM…KDKT), and 224–244 (EVQL…AELR).

The protein localises to the cytoplasm. It is found in the cytoskeleton. Its function is as follows. Involved in cytokinesis and septation where it has a role in the localization of F-actin. In Xenopus laevis (African clawed frog), this protein is Bridging integrator 3 homolog (bin3).